A 401-amino-acid polypeptide reads, in one-letter code: NADH-dependent flavin oxidoreductase iliE (401 aa).

Residues 25–28 (ASMS) and glutamine 107 contribute to the FMN site. Position 188–191 (188–191 (HAAH)) interacts with substrate. 346-347 (AR) contributes to the FMN binding site.

The protein belongs to the NADH:flavin oxidoreductase/NADH oxidase family.

In terms of biological role, NADH-dependent flavin oxidoreductase; part of the gene cluster that mediates the biosynthesis of ilicicolin H, a 4-hydroxy-2-pyridonealkaloid that has potent and broad antifungal activities by inhibiting the mitochondrial respiration chain. The biosynthesis of ilicicolin H starts with formation of the tetramic acid by the hybrid PKS-NRPS synthetase iliA with the partnering trans-enoyl reductase iliB since iliA lacks a designated enoylreductase (ER) domain. The cytochrome P450 monooxygenase iliC then catalyzes the ring expansion of the tetramate to the acyclic 2-pyridone. The pericyclase iliD further converts the acyclic 2-pyridone into 8-epi-ilicicolin H. 8-epi-ilicicolin H might then spontaneously convert to ilicicolin H since ilicicolin H is produced in the absence of the epimerase iliE, in contrast to what was observed for the Talaromyces variabilis ilicolin H biosynthetic pathway. This Hypocrea jecorina (strain QM6a) (Trichoderma reesei) protein is NADH-dependent flavin oxidoreductase iliE.